Here is a 211-residue protein sequence, read N- to C-terminus: Urease accessory protein UreG (211 aa).

Position 11 to 18 (11 to 18) interacts with GTP; that stretch reads GPVGAGKT.

The protein belongs to the SIMIBI class G3E GTPase family. UreG subfamily. In terms of assembly, homodimer. UreD, UreF and UreG form a complex that acts as a GTP-hydrolysis-dependent molecular chaperone, activating the urease apoprotein by helping to assemble the nickel containing metallocenter of UreC. The UreE protein probably delivers the nickel.

Its subcellular location is the cytoplasm. Its function is as follows. Facilitates the functional incorporation of the urease nickel metallocenter. This process requires GTP hydrolysis, probably effectuated by UreG. The chain is Urease accessory protein UreG from Actinobacillus pleuropneumoniae serotype 5b (strain L20).